Consider the following 2198-residue polypeptide: Activating signal cointegrator 1 complex subunit 3 (2198 aa).

At Ser12 the chain carries Phosphoserine. 2 coiled-coil regions span residues 18–81 (KQDN…KQIV) and 328–356 (IQSEQEKQLMKQYRREEKRIARREKKAGE). Residues 487–670 (ETAYNTNENM…FLHVNPYIGL (184 aa)) form the Helicase ATP-binding 1 domain. 500-507 (APTGAGKT) provides a ligand contact to ATP. Lys573 is modified (N6-acetyllysine). The short motif at 612–615 (DEVH) is the DEVH box element. Residues 697-915 (QLNNMDEVCY…GTVTNVEEAV (219 aa)) form the Helicase C-terminal 1 domain. Positions 979-1288 (STDLGRTASH…GAEAVCIINF (310 aa)) constitute an SEC63 1 domain. In terms of domain architecture, Helicase ATP-binding 2 spans 1337 to 1512 (HTLYHTDCNV…WLNIKQMGLF (176 aa)). 1350–1357 (APTGSGKT) is an ATP binding site. The short motif at 1454–1457 (DEIH) is the DEIH box element. The Helicase C-terminal 2 domain occupies 1545 to 1740 (PAFQAIRSHS…VLSDHLNAEI (196 aa)). The SEC63 2 domain maps to 1813 to 2177 (PLTCGRIASY…LGLDQQYDIY (365 aa)).

This sequence belongs to the helicase family. Identified in the ASCC complex that contains ASCC1, ASCC2 and ASCC3. Functions as a scaffolding subunit that interacts directly with both ASCC1 and ASCC2. Interacts directly with ALKBH3, and thereby recruits ALKBH3 to the ASCC complex. Part of the ASC-1/TRIP4 complex, that contains TRIP4, ASCC1, ASCC2 and ASCC3. Part of the RQT (ribosome quality control trigger) complex, that contains ASCC2, ASCC3 and TRIP4. Associates with ribosomes; recruited to collided ribosomes. Interacts with ZCCHC4. Interacts with ZNF598. Interacts with RPS3.

The protein localises to the nucleus. It localises to the nucleus speckle. It is found in the cytoplasm. The protein resides in the cytosol. The enzyme catalyses Couples ATP hydrolysis with the unwinding of duplex DNA by translocating in the 3'-5' direction.. The catalysed reaction is ATP + H2O = ADP + phosphate + H(+). ATPase involved both in DNA repair and rescue of stalled ribosomes. 3'-5' DNA helicase involved in repair of alkylated DNA: promotes DNA unwinding to generate single-stranded substrate needed for ALKBH3, enabling ALKBH3 to process alkylated N3-methylcytosine (3mC) within double-stranded regions. Also involved in activation of the ribosome quality control (RQC) pathway, a pathway that degrades nascent peptide chains during problematic translation. Drives the splitting of stalled ribosomes that are ubiquitinated in a ZNF598-dependent manner, as part of the ribosome quality control trigger (RQT) complex. Part of the ASC-1 complex that enhances NF-kappa-B, SRF and AP1 transactivation. This Mus musculus (Mouse) protein is Activating signal cointegrator 1 complex subunit 3 (Ascc3).